We begin with the raw amino-acid sequence, 785 residues long: Phenylalanine--tRNA ligase beta subunit (785 aa).

Residues 38–150 (CEHLKTFVIA…NTYNVGDTFF (113 aa)) enclose the tRNA-binding domain. Positions 394 to 470 (VDNIELNFFP…RLYGYDKICE (77 aa)) constitute a B5 domain. Mg(2+) contacts are provided by aspartate 448, aspartate 454, glutamate 457, and glutamate 458. In terms of domain architecture, FDX-ACB spans 690–783 (SCYQSVKRDF…VAEKLGGVLR (94 aa)).

This sequence belongs to the phenylalanyl-tRNA synthetase beta subunit family. Type 1 subfamily. Tetramer of two alpha and two beta subunits. Requires Mg(2+) as cofactor.

Its subcellular location is the cytoplasm. It carries out the reaction tRNA(Phe) + L-phenylalanine + ATP = L-phenylalanyl-tRNA(Phe) + AMP + diphosphate + H(+). This chain is Phenylalanine--tRNA ligase beta subunit, found in Ehrlichia canis (strain Jake).